We begin with the raw amino-acid sequence, 45 residues long: Large ribosomal subunit protein bL34 (45 aa).

The interval 1 to 45 (MTKRTFGGTSRKRKRVSGFRVRMRSHTGRRVIKSRRKRGRERIAV) is disordered. The segment covering 10–45 (SRKRKRVSGFRVRMRSHTGRRVIKSRRKRGRERIAV) has biased composition (basic residues).

This sequence belongs to the bacterial ribosomal protein bL34 family.

The chain is Large ribosomal subunit protein bL34 from Prochlorococcus marinus subsp. pastoris (strain CCMP1986 / NIES-2087 / MED4).